We begin with the raw amino-acid sequence, 361 residues long: DNA replication and repair protein RecF (361 aa).

Position 30–37 (30–37) interacts with ATP; that stretch reads GDNAQGKT.

This sequence belongs to the RecF family.

It localises to the cytoplasm. The RecF protein is involved in DNA metabolism; it is required for DNA replication and normal SOS inducibility. RecF binds preferentially to single-stranded, linear DNA. It also seems to bind ATP. The polypeptide is DNA replication and repair protein RecF (Clostridium botulinum (strain Eklund 17B / Type B)).